The following is a 114-amino-acid chain: Large ribosomal subunit protein bL19 (114 aa).

Belongs to the bacterial ribosomal protein bL19 family.

This protein is located at the 30S-50S ribosomal subunit interface and may play a role in the structure and function of the aminoacyl-tRNA binding site. This is Large ribosomal subunit protein bL19 from Lactococcus lactis subsp. lactis (strain IL1403) (Streptococcus lactis).